Reading from the N-terminus, the 251-residue chain is uncharacterized protein (251 aa).

This sequence belongs to the FAM243 family.

This is an uncharacterized protein from Homo sapiens (Human).